The following is a 261-amino-acid chain: Triosephosphate isomerase (261 aa).

10–12 (NWK) contacts substrate. His100 acts as the Electrophile in catalysis. The active-site Proton acceptor is Glu172. Residues Gly178, Ser218, and 239–240 (GG) each bind substrate.

It belongs to the triosephosphate isomerase family. Homodimer.

It localises to the cytoplasm. It carries out the reaction D-glyceraldehyde 3-phosphate = dihydroxyacetone phosphate. Its pathway is carbohydrate biosynthesis; gluconeogenesis. It functions in the pathway carbohydrate degradation; glycolysis; D-glyceraldehyde 3-phosphate from glycerone phosphate: step 1/1. Its function is as follows. Involved in the gluconeogenesis. Catalyzes stereospecifically the conversion of dihydroxyacetone phosphate (DHAP) to D-glyceraldehyde-3-phosphate (G3P). The sequence is that of Triosephosphate isomerase from Mycobacterium marinum (strain ATCC BAA-535 / M).